The following is a 463-amino-acid chain: ATP synthase subunit beta (463 aa).

151–158 (GGAGVGKT) is a binding site for ATP.

This sequence belongs to the ATPase alpha/beta chains family. F-type ATPases have 2 components, CF(1) - the catalytic core - and CF(0) - the membrane proton channel. CF(1) has five subunits: alpha(3), beta(3), gamma(1), delta(1), epsilon(1). CF(0) has three main subunits: a(1), b(2) and c(9-12). The alpha and beta chains form an alternating ring which encloses part of the gamma chain. CF(1) is attached to CF(0) by a central stalk formed by the gamma and epsilon chains, while a peripheral stalk is formed by the delta and b chains.

It localises to the cell membrane. It carries out the reaction ATP + H2O + 4 H(+)(in) = ADP + phosphate + 5 H(+)(out). Functionally, produces ATP from ADP in the presence of a proton gradient across the membrane. The catalytic sites are hosted primarily by the beta subunits. The sequence is that of ATP synthase subunit beta from Clostridium botulinum (strain Loch Maree / Type A3).